Here is a 511-residue protein sequence, read N- to C-terminus: Glucans biosynthesis protein G (511 aa).

The N-terminal stretch at 1–22 (MMKMRWLSAAVMLTLYTSSSWA) is a signal peptide.

The protein belongs to the OpgD/OpgG family.

It localises to the periplasm. Its pathway is glycan metabolism; osmoregulated periplasmic glucan (OPG) biosynthesis. In terms of biological role, involved in the biosynthesis of osmoregulated periplasmic glucans (OPGs). The protein is Glucans biosynthesis protein G of Escherichia coli (strain K12 / MC4100 / BW2952).